Here is a 163-residue protein sequence, read N- to C-terminus: Nucleotide-binding protein YajQ (163 aa).

The protein belongs to the YajQ family.

Nucleotide-binding protein. The chain is Nucleotide-binding protein YajQ from Escherichia coli (strain K12 / DH10B).